Reading from the N-terminus, the 305-residue chain is UDP-3-O-acyl-N-acetylglucosamine deacetylase (305 aa).

His-79, His-238, and Asp-242 together coordinate Zn(2+). His-265 functions as the Proton donor in the catalytic mechanism.

It belongs to the LpxC family. It depends on Zn(2+) as a cofactor.

The enzyme catalyses a UDP-3-O-[(3R)-3-hydroxyacyl]-N-acetyl-alpha-D-glucosamine + H2O = a UDP-3-O-[(3R)-3-hydroxyacyl]-alpha-D-glucosamine + acetate. It functions in the pathway glycolipid biosynthesis; lipid IV(A) biosynthesis; lipid IV(A) from (3R)-3-hydroxytetradecanoyl-[acyl-carrier-protein] and UDP-N-acetyl-alpha-D-glucosamine: step 2/6. Catalyzes the hydrolysis of UDP-3-O-myristoyl-N-acetylglucosamine to form UDP-3-O-myristoylglucosamine and acetate, the committed step in lipid A biosynthesis. The protein is UDP-3-O-acyl-N-acetylglucosamine deacetylase of Haemophilus influenzae (strain 86-028NP).